The sequence spans 170 residues: Class I hydrophobin E (170 aa).

An N-terminal signal peptide occupies residues 1 to 19 (MQLTTLLTGLISVLSVTTA). 4 disulfide bridges follow: cysteine 62/cysteine 126, cysteine 70/cysteine 117, cysteine 71/cysteine 105, and cysteine 127/cysteine 139.

The protein belongs to the fungal hydrophobin family.

The protein resides in the secreted. It is found in the cell wall. Aerial growth, conidiation, and dispersal of filamentous fungi in the environment rely upon a capability of their secreting small amphipathic proteins called hydrophobins (HPBs) with low sequence identity. Class I can self-assemble into an outermost layer of rodlet bundles on aerial cell surfaces, conferring cellular hydrophobicity that supports fungal growth, development and dispersal; whereas Class II form highly ordered films at water-air interfaces through intermolecular interactions but contribute nothing to the rodlet structure. In P.expansum, hydrophobins contribute to germination, tolerance to cold stress and mycotoxins patulin and citrinin production. The protein is Class I hydrophobin E of Penicillium expansum (Blue mold rot fungus).